Reading from the N-terminus, the 160-residue chain is Probable nucleoside diphosphate kinase DDB_G0292928 (160 aa).

Positions 12, 61, 103, 109, 122, and 132 each coordinate ATP. The Pros-phosphohistidine intermediate role is filled by histidine 135.

It belongs to the NDK family. Mg(2+) is required as a cofactor.

It catalyses the reaction a 2'-deoxyribonucleoside 5'-diphosphate + ATP = a 2'-deoxyribonucleoside 5'-triphosphate + ADP. The catalysed reaction is a ribonucleoside 5'-diphosphate + ATP = a ribonucleoside 5'-triphosphate + ADP. The sequence is that of Probable nucleoside diphosphate kinase DDB_G0292928 from Dictyostelium discoideum (Social amoeba).